We begin with the raw amino-acid sequence, 174 residues long: Photosystem II repair protein PSB27-H1, chloroplastic (174 aa).

The tract at residues 1-35 is disordered; sequence MASASATATLLKPNLPPHKPTIIASSVSPPLPPPR. Threonine 94 carries the phosphothreonine modification. Residue tyrosine 132 is modified to Phosphotyrosine.

It belongs to the Psb27 family.

The protein localises to the plastid. It localises to the chloroplast thylakoid membrane. Probably involved in repair of photodamaged photosystem II (PSII). The chain is Photosystem II repair protein PSB27-H1, chloroplastic (PSB27-1) from Arabidopsis thaliana (Mouse-ear cress).